The sequence spans 425 residues: MNYSRFLTATSLARKTSPIRATVEIMSRAPKDIISLAPGSPNPKVFPFKSAVFTVENGSTIRFEGEMFQRALQYSSSYGIPELLSWLKQLQIKLHNPPTVNYSPNEGQMDLCITSGCQDGLCKVFEMLINPGDTVLVNEPLYSGALFAMKPLGCNFISVPSDDCGIIPEGLKKVLSQWKPEDSKDPTKRTPKFLYTIPNGNNPTGNSLTGDRKKEIYELARKYDFLIIEDDPYYFLQFTKPWEPTFLSMDVDGRVIRADSLSKVISSGLRVGFITGPKSLIQRIVLHTQISSLHPCTLSQLMISELLYQWGEEGFLAHVDRAIDFYKNQRDFILAAADKWLRGLAEWHVPKAGMFLWIKVNGISDAKKLIEEKAIEREILLVPGNSFFVDNSAPSSFFRASFSQVTPAQMDLVFQRLAQLIKDVS.

The transit peptide at 1 to 29 (MNYSRFLTATSLARKTSPIRATVEIMSRA) directs the protein to the mitochondrion. Arg20 serves as a coordination point for substrate. Ser40 bears the Phosphoserine mark. The substrate site is built by Tyr74 and Tyr142. The residue at position 172 (Lys172) is an N6-succinyllysine. Position 179 is an N6-acetyllysine (Lys179). Residues 179 to 188 (KPEDSKDPTK) are compositionally biased toward basic and acidic residues. A disordered region spans residues 179–208 (KPEDSKDPTKRTPKFLYTIPNGNNPTGNSL). Over residues 198 to 208 (PNGNNPTGNSL) the composition is skewed to polar residues. Asn202 is a binding site for substrate. Residue Lys263 is modified to N6-(pyridoxal phosphate)lysine; alternate. N6-acetyllysine; alternate occurs at positions 263 and 339. An N6-succinyllysine; alternate mark is found at Lys263 and Lys339. Position 351 is an N6-acetyllysine (Lys351). Lys367 carries the post-translational modification N6-acetyllysine; alternate. An N6-succinyllysine; alternate modification is found at Lys367. Arg399 contacts substrate. Lys422 is subject to N6-acetyllysine.

This sequence belongs to the class-I pyridoxal-phosphate-dependent aminotransferase family. As to quaternary structure, homodimer. Pyridoxal 5'-phosphate is required as a cofactor. The N-terminus is blocked.

Its subcellular location is the mitochondrion. It catalyses the reaction L-kynurenine + 2-oxoglutarate = kynurenate + L-glutamate + H2O. The enzyme catalyses L-2-aminoadipate + 2-oxoglutarate = 2-oxoadipate + L-glutamate. The catalysed reaction is glycine + 2-oxoglutarate = glyoxylate + L-glutamate. It carries out the reaction L-kynurenine + glyoxylate = kynurenate + glycine + H2O. It catalyses the reaction 3-hydroxy-L-kynurenine + glyoxylate = xanthurenate + glycine + H2O. The enzyme catalyses 2-oxohexanoate + L-kynurenine = L-2-aminohexanoate + kynurenate + H2O. The catalysed reaction is 3-phenylpyruvate + L-kynurenine = kynurenate + L-phenylalanine + H2O. It carries out the reaction 4-methylsulfanyl-2-oxobutanoate + L-kynurenine = kynurenate + L-methionine + H2O. It catalyses the reaction 2-oxo-3-sulfanylpropanoate + L-kynurenine = kynurenate + L-cysteine + H2O. The enzyme catalyses indole-3-pyruvate + L-kynurenine = kynurenate + L-tryptophan + H2O. The catalysed reaction is 2-oxopentanoate + L-kynurenine = L-2-aminopentanoate + kynurenate + H2O. It carries out the reaction 4-methyl-2-oxopentanoate + L-kynurenine = kynurenate + L-leucine + H2O. It catalyses the reaction glyoxylate + L-methionine = 4-methylsulfanyl-2-oxobutanoate + glycine. The enzyme catalyses L-2-aminoadipate + glyoxylate = 2-oxoadipate + glycine. The catalysed reaction is L-tyrosine + glyoxylate = 3-(4-hydroxyphenyl)pyruvate + glycine. It carries out the reaction glyoxylate + L-phenylalanine = 3-phenylpyruvate + glycine. It catalyses the reaction L-tryptophan + glyoxylate = indole-3-pyruvate + glycine. The enzyme catalyses L-leucine + glyoxylate = 4-methyl-2-oxopentanoate + glycine. The catalysed reaction is 2-oxobutanoate + L-kynurenine = (2S)-2-aminobutanoate + kynurenate + H2O. It carries out the reaction 2-oxoadipate + L-kynurenine = L-2-aminoadipate + kynurenate + H2O. It catalyses the reaction 2-oxoadipate + L-kynurenine = 4-(2-aminophenyl)-2,4-dioxobutanoate + L-2-aminoadipate. It participates in amino-acid degradation; L-lysine degradation via saccharopine pathway; glutaryl-CoA from L-lysine: step 4/6. In terms of biological role, transaminase with broad substrate specificity. Has transaminase activity towards aminoadipate, kynurenine, methionine and glutamate. Shows activity also towards tryptophan, aspartate and hydroxykynurenine. Accepts a variety of oxo-acids as amino-group acceptors, with a preference for 2-oxoglutarate, 2-oxocaproic acid, phenylpyruvate and alpha-oxo-gamma-methiol butyric acid. Can also use glyoxylate as amino-group acceptor (in vitro). This chain is Kynurenine/alpha-aminoadipate aminotransferase, mitochondrial, found in Rattus norvegicus (Rat).